The sequence spans 66 residues: Protein I177L (66 aa).

The N-linked (GlcNAc...) asparagine; by host glycan is linked to asparagine 11.

The protein belongs to the asfivirus I177L family.

The protein localises to the virion. This is Protein I177L from African swine fever virus (strain Badajoz 1971 Vero-adapted) (Ba71V).